Consider the following 89-residue polypeptide: UPF0335 protein CCNA_03428 (89 aa).

This sequence belongs to the UPF0335 family.

The chain is UPF0335 protein CCNA_03428 from Caulobacter vibrioides (strain NA1000 / CB15N) (Caulobacter crescentus).